The primary structure comprises 656 residues: DNA ligase (656 aa).

NAD(+) is bound by residues 32–36 (DAIYD) and 81–82 (SL). K112 acts as the N6-AMP-lysine intermediate in catalysis. Residues R133, E167, and K306 each contribute to the NAD(+) site. Zn(2+) is bound by residues C400, C403, C416, and C421. The BRCT domain maps to 577–656 (KSSSVFNNKT…ELLKRLKELD (80 aa)).

Belongs to the NAD-dependent DNA ligase family. LigA subfamily. Mg(2+) serves as cofactor. Requires Mn(2+) as cofactor.

The catalysed reaction is NAD(+) + (deoxyribonucleotide)n-3'-hydroxyl + 5'-phospho-(deoxyribonucleotide)m = (deoxyribonucleotide)n+m + AMP + beta-nicotinamide D-nucleotide.. In terms of biological role, DNA ligase that catalyzes the formation of phosphodiester linkages between 5'-phosphoryl and 3'-hydroxyl groups in double-stranded DNA using NAD as a coenzyme and as the energy source for the reaction. It is essential for DNA replication and repair of damaged DNA. This chain is DNA ligase, found in Helicobacter pylori (strain ATCC 700392 / 26695) (Campylobacter pylori).